Reading from the N-terminus, the 416-residue chain is Casein kinase I isoform epsilon (416 aa).

The Protein kinase domain maps to 9-277; that stretch reads YRLGRKIGSG…YLRQLFRNLF (269 aa). ATP contacts are provided by residues 15-23 and K38; that span reads IGSGSFGDI. Residue D128 is the Proton acceptor of the active site. Residues 301–318 show a composition bias toward basic and acidic residues; sequence PEDMDRERREHEREERMG. The segment at 301 to 416 is disordered; it reads PEDMDRERRE…TSVPFDHLGK (116 aa). The span at 324–338 shows a compositional bias: low complexity; sequence ATRALPPGPPAGATG. Polar residues-rich tracts occupy residues 350–365 and 400–409; these read STPTSRIQQSGNTSPR and SRISASQTSV.

The protein belongs to the protein kinase superfamily. CK1 Ser/Thr protein kinase family. Casein kinase I subfamily. Monomer. Component of the circadian core oscillator, which includes the CRY proteins, CLOCK, or NPAS2, BMAL1 or BMAL2, CSNK1E, and the PER proteins.

The protein localises to the cytoplasm. The catalysed reaction is L-seryl-[protein] + ATP = O-phospho-L-seryl-[protein] + ADP + H(+). It carries out the reaction L-threonyl-[protein] + ATP = O-phospho-L-threonyl-[protein] + ADP + H(+). Functionally, casein kinases are operationally defined by their preferential utilization of acidic proteins such as caseins as substrates. Can phosphorylate a large number of proteins. Participates in Wnt signaling. Phosphorylates DVL1. Central component of the circadian clock. May act as a negative regulator of circadian rhythmicity by phosphorylating PER1 and PER2. Retains PER1 in the cytoplasm. This chain is Casein kinase I isoform epsilon (CSNK1E), found in Gallus gallus (Chicken).